We begin with the raw amino-acid sequence, 208 residues long: N-(5'-phosphoribosyl)anthranilate isomerase (208 aa).

It belongs to the TrpF family.

It carries out the reaction N-(5-phospho-beta-D-ribosyl)anthranilate = 1-(2-carboxyphenylamino)-1-deoxy-D-ribulose 5-phosphate. The protein operates within amino-acid biosynthesis; L-tryptophan biosynthesis; L-tryptophan from chorismate: step 3/5. This is N-(5'-phosphoribosyl)anthranilate isomerase from Methanococcus maripaludis (strain C7 / ATCC BAA-1331).